The sequence spans 357 residues: Protein RecA (357 aa).

67–74 lines the ATP pocket; sequence GPESSGKT. Positions 332 to 357 are disordered; sequence PSAMSSSSSDDENSEGNVDFETGEVF.

Belongs to the RecA family.

The protein localises to the cytoplasm. Can catalyze the hydrolysis of ATP in the presence of single-stranded DNA, the ATP-dependent uptake of single-stranded DNA by duplex DNA, and the ATP-dependent hybridization of homologous single-stranded DNAs. It interacts with LexA causing its activation and leading to its autocatalytic cleavage. This Shewanella sp. (strain ANA-3) protein is Protein RecA.